A 400-amino-acid chain; its full sequence is Acetate kinase (400 aa).

N10 provides a ligand contact to Mg(2+). Residue K17 coordinates ATP. Position 91 (R91) interacts with substrate. Catalysis depends on D150, which acts as the Proton donor/acceptor. Residues 210-214 (HLGNG), 285-287 (DCR), and 333-337 (GIGEN) each bind ATP. E387 serves as a coordination point for Mg(2+).

This sequence belongs to the acetokinase family. As to quaternary structure, homodimer. Mg(2+) serves as cofactor. It depends on Mn(2+) as a cofactor.

The protein resides in the cytoplasm. The enzyme catalyses acetate + ATP = acetyl phosphate + ADP. It functions in the pathway metabolic intermediate biosynthesis; acetyl-CoA biosynthesis; acetyl-CoA from acetate: step 1/2. Functionally, catalyzes the formation of acetyl phosphate from acetate and ATP. Can also catalyze the reverse reaction. The polypeptide is Acetate kinase (Proteus mirabilis (strain HI4320)).